The sequence spans 767 residues: Polyribonucleotide nucleotidyltransferase (767 aa).

Residues D509 and D515 each coordinate Mg(2+). The KH domain occupies 575-634 (PRILTVKVPIDKIGEVIGPKGKMINSIQDETGAEITIEDDGTIYIGATDGPSAEAARDAI). Residues 646-718 (GERYLGTVVK…ERGKLSLVPV (73 aa)) form the S1 motif domain. Residues 725 to 767 (AVAAPNGGESPNGAKKTDASGNGAKQPRRRRRTRSSSRSSENT) are disordered. The span at 750–759 (QPRRRRRTRS) shows a compositional bias: basic residues.

It belongs to the polyribonucleotide nucleotidyltransferase family. Requires Mg(2+) as cofactor.

It is found in the cytoplasm. The enzyme catalyses RNA(n+1) + phosphate = RNA(n) + a ribonucleoside 5'-diphosphate. In terms of biological role, involved in mRNA degradation. Catalyzes the phosphorolysis of single-stranded polyribonucleotides processively in the 3'- to 5'-direction. The chain is Polyribonucleotide nucleotidyltransferase from Thermobifida fusca (strain YX).